A 562-amino-acid chain; its full sequence is Calmodulin-binding protein 60 F (562 aa).

The disordered stretch occupies residues 1–22 (MENSMNNRGHGHNQEHADNLPE). Residues 5–84 (MNNRGHGHNQ…STSRSTEPNK (80 aa)) are calmodulin-binding. Over residues 12–22 (HNQEHADNLPE) the composition is skewed to basic and acidic residues. Residues 154-273 (EDDKDWTREH…ALHKKLLKSN (120 aa)) form a DNA-binding region.

It belongs to the plant ACBP60 protein family. As to quaternary structure, interacts with calmodulin (CaM).

It is found in the nucleus. Functionally, transcription activator that binds DNA in a sequence-specific manner, likely 5'-GAAATTTTGG-3', to promote the expression of target genes. This is Calmodulin-binding protein 60 F from Arabidopsis thaliana (Mouse-ear cress).